Consider the following 89-residue polypeptide: Small ribosomal subunit protein uS15 (89 aa).

This sequence belongs to the universal ribosomal protein uS15 family. As to quaternary structure, part of the 30S ribosomal subunit. Forms a bridge to the 50S subunit in the 70S ribosome, contacting the 23S rRNA.

In terms of biological role, one of the primary rRNA binding proteins, it binds directly to 16S rRNA where it helps nucleate assembly of the platform of the 30S subunit by binding and bridging several RNA helices of the 16S rRNA. Its function is as follows. Forms an intersubunit bridge (bridge B4) with the 23S rRNA of the 50S subunit in the ribosome. The polypeptide is Small ribosomal subunit protein uS15 (Granulibacter bethesdensis (strain ATCC BAA-1260 / CGDNIH1)).